The sequence spans 245 residues: Acetylglutamate kinase (245 aa).

Substrate is bound by residues 41-42 (GG), arginine 63, and asparagine 156.

This sequence belongs to the acetylglutamate kinase family. ArgB subfamily.

It localises to the cytoplasm. The enzyme catalyses N-acetyl-L-glutamate + ATP = N-acetyl-L-glutamyl 5-phosphate + ADP. It functions in the pathway amino-acid biosynthesis; L-arginine biosynthesis; N(2)-acetyl-L-ornithine from L-glutamate: step 2/4. Its function is as follows. Catalyzes the ATP-dependent phosphorylation of N-acetyl-L-glutamate. The chain is Acetylglutamate kinase from Staphylococcus epidermidis (strain ATCC 35984 / DSM 28319 / BCRC 17069 / CCUG 31568 / BM 3577 / RP62A).